A 504-amino-acid polypeptide reads, in one-letter code: Glycerol kinase (504 aa).

An ADP-binding site is contributed by threonine 14. ATP-binding residues include threonine 14, threonine 15, and serine 16. Residue threonine 14 participates in sn-glycerol 3-phosphate binding. Position 18 (arginine 18) interacts with ADP. Residues arginine 84, glutamate 85, tyrosine 136, and aspartate 246 each coordinate sn-glycerol 3-phosphate. Residues arginine 84, glutamate 85, tyrosine 136, aspartate 246, and glutamine 247 each coordinate glycerol. Residues threonine 268 and glycine 311 each coordinate ADP. ATP is bound by residues threonine 268, glycine 311, glutamine 315, and glycine 412. Glycine 412 and asparagine 416 together coordinate ADP.

It belongs to the FGGY kinase family.

The catalysed reaction is glycerol + ATP = sn-glycerol 3-phosphate + ADP + H(+). The protein operates within polyol metabolism; glycerol degradation via glycerol kinase pathway; sn-glycerol 3-phosphate from glycerol: step 1/1. Its activity is regulated as follows. Inhibited by fructose 1,6-bisphosphate (FBP). In terms of biological role, key enzyme in the regulation of glycerol uptake and metabolism. Catalyzes the phosphorylation of glycerol to yield sn-glycerol 3-phosphate. The polypeptide is Glycerol kinase (Aliivibrio salmonicida (strain LFI1238) (Vibrio salmonicida (strain LFI1238))).